The sequence spans 395 residues: Trans-2-enoyl-CoA reductase [NADH] (395 aa).

NAD(+) contacts are provided by residues 47-52 (GASTGY), 73-74 (FE), 110-111 (DA), and 138-139 (LA). Tyr-224 provides a ligand contact to substrate. Tyr-234 (proton donor) is an active-site residue. NAD(+) is bound by residues Lys-243 and 272–274 (VVT).

The protein belongs to the TER reductase family. As to quaternary structure, monomer.

It catalyses the reaction a 2,3-saturated acyl-CoA + NAD(+) = a (2E)-enoyl-CoA + NADH + H(+). Its pathway is lipid metabolism; fatty acid biosynthesis. Its function is as follows. Involved in the fatty acid synthesis (FAS II). Catalyzes the reduction of a carbon-carbon double bond in an enoyl moiety that is covalently linked to a coenzyme A (CoA). This Ruminiclostridium cellulolyticum (strain ATCC 35319 / DSM 5812 / JCM 6584 / H10) (Clostridium cellulolyticum) protein is Trans-2-enoyl-CoA reductase [NADH].